Here is a 110-residue protein sequence, read N- to C-terminus: Phosphoribosyl-ATP pyrophosphatase (110 aa).

The protein belongs to the PRA-PH family.

Its subcellular location is the cytoplasm. It catalyses the reaction 1-(5-phospho-beta-D-ribosyl)-ATP + H2O = 1-(5-phospho-beta-D-ribosyl)-5'-AMP + diphosphate + H(+). It participates in amino-acid biosynthesis; L-histidine biosynthesis; L-histidine from 5-phospho-alpha-D-ribose 1-diphosphate: step 2/9. The polypeptide is Phosphoribosyl-ATP pyrophosphatase (Teredinibacter turnerae (strain ATCC 39867 / T7901)).